Reading from the N-terminus, the 409-residue chain is LL-diaminopimelate aminotransferase (409 aa).

Residues tyrosine 15 and glycine 42 each coordinate substrate. Residues tyrosine 72, 108 to 109, tyrosine 132, asparagine 186, tyrosine 217, and 245 to 247 each bind pyridoxal 5'-phosphate; these read AK and SFS. Residues lysine 109, tyrosine 132, and asparagine 186 each contribute to the substrate site. Lysine 248 carries the N6-(pyridoxal phosphate)lysine modification. Arginine 256 and asparagine 291 together coordinate pyridoxal 5'-phosphate. Asparagine 291 and arginine 386 together coordinate substrate.

The protein belongs to the class-I pyridoxal-phosphate-dependent aminotransferase family. LL-diaminopimelate aminotransferase subfamily. In terms of assembly, homodimer. The cofactor is pyridoxal 5'-phosphate.

The enzyme catalyses (2S,6S)-2,6-diaminopimelate + 2-oxoglutarate = (S)-2,3,4,5-tetrahydrodipicolinate + L-glutamate + H2O + H(+). Its pathway is amino-acid biosynthesis; L-lysine biosynthesis via DAP pathway; LL-2,6-diaminopimelate from (S)-tetrahydrodipicolinate (aminotransferase route): step 1/1. Its function is as follows. Involved in the synthesis of meso-diaminopimelate (m-DAP or DL-DAP), required for both lysine and peptidoglycan biosynthesis. Catalyzes the direct conversion of tetrahydrodipicolinate to LL-diaminopimelate. This is LL-diaminopimelate aminotransferase from Desulforapulum autotrophicum (strain ATCC 43914 / DSM 3382 / VKM B-1955 / HRM2) (Desulfobacterium autotrophicum).